A 515-amino-acid polypeptide reads, in one-letter code: MSREKYYITTAIAYPNGKPHIGHAYELIATDAMARFQRLNGMDVYFLTGTDEHGIKMLQSARKEGITPRELADRNTSAFRRMAEVLNSSNDDYIRTSEERHYKASQAIWQAMVANGDIYKGGYAGWYSVRDEAYYGEEETEVRADGVRYGPQGTPVEWVEEESYFFRLSAYQDKLLDLYENNPGFIMPAERRNEIVSFVKSGLKDLSISRTTFDWGIPVPGDEKHVMYVWVDALTNYITALGYPDTTDERWAYWPANAHIIGKDISRFHAVYWPAFLMSAQLPLPKRVFAHGFLFNRGEKMSKSVGNVIDPFELVERYGLDQLRYFLMREVPFGQDGSYSHEAIVNRTNADLANDLGNLAQRSLSMIAKNCEGKVPQPGAFSEADKAILDQADAALETARKAMDDQALHLALGAIFAVVAEANRYFAGQEPWALRKTDPARMGTVLYVTAEVLRRVGIMVQPFIPQSAEKLLDILAVPADKRQFADVLASPLAGGTDLPAPQPVFPRYVEADEQN.

A 'HIGH' region motif is present at residues 13–23; the sequence is AYPNGKPHIGH. Residues 300–304 carry the 'KMSKS' region motif; sequence KMSKS. An ATP-binding site is contributed by lysine 303.

It belongs to the class-I aminoacyl-tRNA synthetase family. MetG type 2B subfamily. As to quaternary structure, monomer.

It localises to the cytoplasm. The enzyme catalyses tRNA(Met) + L-methionine + ATP = L-methionyl-tRNA(Met) + AMP + diphosphate. Is required not only for elongation of protein synthesis but also for the initiation of all mRNA translation through initiator tRNA(fMet) aminoacylation. This chain is Methionine--tRNA ligase, found in Brucella suis biovar 1 (strain 1330).